The sequence spans 319 residues: Ribose-phosphate pyrophosphokinase (319 aa).

ATP-binding positions include 40–42 (DGE) and 99–100 (RQ). Mg(2+) is bound by residues histidine 134 and aspartate 174. Lysine 198 is an active-site residue. D-ribose 5-phosphate contacts are provided by residues arginine 200, aspartate 224, and 228 to 232 (DTAGT).

The protein belongs to the ribose-phosphate pyrophosphokinase family. Class I subfamily. Homohexamer. Mg(2+) serves as cofactor.

It is found in the cytoplasm. It catalyses the reaction D-ribose 5-phosphate + ATP = 5-phospho-alpha-D-ribose 1-diphosphate + AMP + H(+). It participates in metabolic intermediate biosynthesis; 5-phospho-alpha-D-ribose 1-diphosphate biosynthesis; 5-phospho-alpha-D-ribose 1-diphosphate from D-ribose 5-phosphate (route I): step 1/1. In terms of biological role, involved in the biosynthesis of the central metabolite phospho-alpha-D-ribosyl-1-pyrophosphate (PRPP) via the transfer of pyrophosphoryl group from ATP to 1-hydroxyl of ribose-5-phosphate (Rib-5-P). This chain is Ribose-phosphate pyrophosphokinase, found in Coxiella burnetii (strain RSA 493 / Nine Mile phase I).